The primary structure comprises 129 residues: uncharacterized protein (129 aa).

It localises to the cytoplasm. The protein localises to the cytosol. It is found in the nucleus. This is an uncharacterized protein from Schizosaccharomyces pombe (strain 972 / ATCC 24843) (Fission yeast).